Here is a 154-residue protein sequence, read N- to C-terminus: Transcription antitermination protein NusB (154 aa).

It belongs to the NusB family.

Functionally, involved in transcription antitermination. Required for transcription of ribosomal RNA (rRNA) genes. Binds specifically to the boxA antiterminator sequence of the ribosomal RNA (rrn) operons. The polypeptide is Transcription antitermination protein NusB (Methylobacillus flagellatus (strain ATCC 51484 / DSM 6875 / VKM B-1610 / KT)).